Reading from the N-terminus, the 509-residue chain is Lanosterol 14-alpha demethylase (509 aa).

Residues 30-50 (GNLLSMLLIACAFTLSLVYLF) form a helical membrane-spanning segment. Cysteine 455 contributes to the heme binding site.

This sequence belongs to the cytochrome P450 family. The cofactor is heme. In terms of processing, ubiquitinated by MARCHF6, leading to proteasomal degradation.

The protein localises to the endoplasmic reticulum membrane. It localises to the microsome membrane. It catalyses the reaction a 14alpha-methyl steroid + 3 reduced [NADPH--hemoprotein reductase] + 3 O2 = a Delta(14) steroid + formate + 3 oxidized [NADPH--hemoprotein reductase] + 4 H2O + 4 H(+). It carries out the reaction lanosterol + 3 reduced [NADPH--hemoprotein reductase] + 3 O2 = 4,4-dimethyl-5alpha-cholesta-8,14,24-trien-3beta-ol + formate + 3 oxidized [NADPH--hemoprotein reductase] + 4 H2O + 4 H(+). The catalysed reaction is 24,25-dihydrolanosterol + 3 reduced [NADPH--hemoprotein reductase] + 3 O2 = 4,4-dimethyl-8,14-cholestadien-3beta-ol + formate + 3 oxidized [NADPH--hemoprotein reductase] + 4 H2O + 4 H(+). The enzyme catalyses a 14alpha-methyl steroid + reduced [NADPH--hemoprotein reductase] + O2 = a 14alpha-hydroxymethyl steroid + oxidized [NADPH--hemoprotein reductase] + H2O + H(+). It catalyses the reaction a 14alpha-hydroxymethyl steroid + reduced [NADPH--hemoprotein reductase] + O2 = a 14alpha-formyl steroid + oxidized [NADPH--hemoprotein reductase] + 2 H2O + H(+). It carries out the reaction a 14alpha-formyl steroid + reduced [NADPH--hemoprotein reductase] + O2 = a Delta(14) steroid + formate + oxidized [NADPH--hemoprotein reductase] + H2O + 2 H(+). The catalysed reaction is lanosterol + reduced [NADPH--hemoprotein reductase] + O2 = 32-hydroxylanosterol + oxidized [NADPH--hemoprotein reductase] + H2O + H(+). The enzyme catalyses 32-hydroxylanosterol + reduced [NADPH--hemoprotein reductase] + O2 = 32-oxolanosterol + oxidized [NADPH--hemoprotein reductase] + 2 H2O + H(+). It catalyses the reaction 32-oxolanosterol + reduced [NADPH--hemoprotein reductase] + O2 = 4,4-dimethyl-5alpha-cholesta-8,14,24-trien-3beta-ol + formate + oxidized [NADPH--hemoprotein reductase] + H2O + 2 H(+). It carries out the reaction 24,25-dihydrolanosterol + reduced [NADPH--hemoprotein reductase] + O2 = 32-hydroxy-24,25-dihydrolanosterol + oxidized [NADPH--hemoprotein reductase] + H2O + H(+). The catalysed reaction is 32-hydroxy-24,25-dihydrolanosterol + reduced [NADPH--hemoprotein reductase] + O2 = 32-oxo-24,25-dihydrolanosterol + oxidized [NADPH--hemoprotein reductase] + 2 H2O + H(+). The enzyme catalyses 32-oxo-24,25-dihydrolanosterol + reduced [NADPH--hemoprotein reductase] + O2 = 4,4-dimethyl-8,14-cholestadien-3beta-ol + formate + oxidized [NADPH--hemoprotein reductase] + H2O + 2 H(+). The protein operates within steroid biosynthesis; zymosterol biosynthesis; zymosterol from lanosterol: step 1/6. Inhibited by azalanstat. Inhibited by azole antifungal agents ketoconazole, itraconazole and fluconazole. Sterol 14alpha-demethylase that plays a critical role in the cholesterol biosynthesis pathway, being cholesterol the major sterol component in mammalian membranes as well as a precursor for bile acid and steroid hormone synthesis. Cytochrome P450 monooxygenase that catalyzes the three-step oxidative removal of the 14alpha-methyl group (C-32) of sterols such as lanosterol (lanosta-8,24-dien-3beta-ol) and 24,25-dihydrolanosterol (DHL) in the form of formate, and converts the sterols to 4,4-dimethyl-5alpha-cholesta-8,14,24-trien-3beta-ol and 4,4-dimethyl-8,14-cholestadien-3beta-ol, respectively, which are intermediates of cholesterol biosynthesis. Can also demethylate substrates not intrinsic to mammals, such as eburicol (24-methylene-24,25-dihydrolanosterol), but at a lower rate than DHL. This is Lanosterol 14-alpha demethylase from Pongo abelii (Sumatran orangutan).